The chain runs to 1103 residues: Centrosomal protein of 126 kDa (1103 aa).

Over residues 1 to 12 (MLAGRPGAQSAG) the composition is skewed to low complexity. A disordered region spans residues 1 to 36 (MLAGRPGAQSAGAGVGAGPPDAPGARDGGGRPRPGA). 2 coiled-coil regions span residues 43–116 (HLEK…FQRA) and 182–222 (QKHL…KLLE). 2 disordered regions span residues 380–409 (NTAE…ESPT) and 723–812 (ESKA…PGQS). Residues 723–735 (ESKAPVHASDSKT) are compositionally biased toward basic and acidic residues. Positions 736–748 (QKTKPQRGVKFTR) are enriched in basic residues. Composition is skewed to polar residues over residues 763 to 784 (RKPT…QTQG) and 798 to 812 (NIKS…PGQS).

As to quaternary structure, interacts with DCTN1.

It is found in the midbody. The protein localises to the cytoplasm. Its subcellular location is the cytoskeleton. It localises to the microtubule organizing center. The protein resides in the centrosome. It is found in the cilium basal body. Participate in cytokinesis. Necessary for microtubules and mitotic spindle organization. Involved in primary cilium formation. The chain is Centrosomal protein of 126 kDa from Mus musculus (Mouse).